Consider the following 91-residue polypeptide: Small ribosomal subunit protein uS19 (91 aa).

The protein belongs to the universal ribosomal protein uS19 family.

Protein S19 forms a complex with S13 that binds strongly to the 16S ribosomal RNA. The protein is Small ribosomal subunit protein uS19 of Pseudomonas fluorescens (strain SBW25).